A 697-amino-acid polypeptide reads, in one-letter code: Lebercilin (697 aa).

Residues 1–90 are disordered; the sequence is MGERAGSPGT…VGFRSQSLNR (90 aa). Residues S7 and S45 each carry the phosphoserine modification. Residues 32–45 show a composition bias toward low complexity; the sequence is SSGRSSLVSSSPAS. Coiled coils occupy residues 103 to 297 and 389 to 485; these read RILS…IKNI and EEKF…RNLK. 3 disordered regions span residues 412-432, 522-548, and 606-697; these read WERE…EREE, HHLQ…PASP, and EQLF…VALR. The span at 416-432 shows a compositional bias: basic and acidic residues; the sequence is ELDKKQKEKASLLEREE. The span at 527-547 shows a compositional bias: polar residues; that stretch reads ISFSTPKGEGQNSGNVRSPAS. Residues 612–626 are compositionally biased toward low complexity; the sequence is SGSSTISSKSSDPNS. The span at 686-697 shows a compositional bias: acidic residues; the sequence is SVEDEIEEVALR.

The protein belongs to the LCA5 family. As to quaternary structure, interacts with NINL. Interacts with OFD1. Interacts with FAM161A. Interacts with components of the IFT complex B. In terms of tissue distribution, widely expressed.

It localises to the cytoplasm. It is found in the cytoskeleton. The protein localises to the cilium axoneme. Its subcellular location is the cilium basal body. The protein resides in the microtubule organizing center. It localises to the centrosome. It is found in the cell projection. The protein localises to the cilium. Its function is as follows. Involved in intraflagellar protein (IFT) transport in photoreceptor cilia. The sequence is that of Lebercilin (LCA5) from Homo sapiens (Human).